The chain runs to 270 residues: Orotidine 5'-phosphate decarboxylase (270 aa).

Substrate contacts are provided by residues Asp39, 61–63 (KTH), 93–102 (DRKFADIGNT), Tyr221, and Arg239. The active-site Proton donor is the Lys95.

It belongs to the OMP decarboxylase family.

It catalyses the reaction orotidine 5'-phosphate + H(+) = UMP + CO2. It participates in pyrimidine metabolism; UMP biosynthesis via de novo pathway; UMP from orotate: step 2/2. The sequence is that of Orotidine 5'-phosphate decarboxylase (URA3) from Candida albicans (strain SC5314 / ATCC MYA-2876) (Yeast).